The chain runs to 11103 residues: Colossin-A (11103 aa).

The first 35 residues, 1-35 (MGTIKTKFKNNYLKNSYLFIIYIILFNLVIGIANS), serve as a signal peptide directing secretion. 4 N-linked (GlcNAc...) asparagine glycosylation sites follow: N95, N120, N137, and N198. One copy of the Kelch 1 repeat lies at 273-324 (NLFAVGNYVFFDVNRDGVHETTELFAPNVKVELYDAISSTRLIASTFTDLNG). One can recognise a CNA-B 1 domain in the interval 298 to 359 (APNVKVELYD…SNGPDNVINA (62 aa)). N-linked (GlcNAc...) asparagine glycans are attached at residues N372, N386, and N422. A CNA-B 2 domain is found at 423 to 469 (LSGITVQLTTPSHVVLKTAQTDYAGNYVFDDLSEGVYSVHFILPENY). N-linked (GlcNAc...) asparagine glycosylation occurs at N493. CNA-B domains are found at residues 551 to 599 (LPGV…PDGY), 676 to 745 (VANV…INLT), 803 to 871 (APFV…FTLN), 931 to 999 (AEGV…IDLS), 1057 to 1095 (LPNITMTLINNAEGGKVVQSVSTDSKGQYSFTNVPEGDY), and 1170 to 1231 (LSNT…FNSS). The N-linked (GlcNAc...) asparagine glycan is linked to N678. N-linked (GlcNAc...) asparagine glycans are attached at residues N1059, N1229, and N1239. A CNA-B 9 domain is found at 1277 to 1314 (ISNIPLSLISQKTNQIISSVVTDSNGKYQFEDVPPGDY). N1329 is a glycosylation site (N-linked (GlcNAc...) asparagine). CNA-B domains lie at 1391–1458 (SDVS…FKLT), 1494–1530 (LPGVELSLQDSNGKVLDTTTTDESGNYKFDNLLPGDY), 1602–1651 (LPGV…YKQV), 1708–1779 (LSDI…VTVK), 1824–1891 (SDVS…FKLT), 1927–1963 (LPGVELSLQDSNGKVLETTTTDESGNYKFDNLLPGDY), 2035–2086 (LPGV…QVAQ), and 2141–2177 (VEGIELNLVDKDGKVIQSTTSGPNGKYQFEDVPPGDY). Residue N1613 is glycosylated (N-linked (GlcNAc...) asparagine). The interval 1716–1740 (TDKDGNEISNTKSGPDGKYQFEDVP) is disordered. Residues N1759 and N1772 are each glycosylated (N-linked (GlcNAc...) asparagine). Residue N2046 is glycosylated (N-linked (GlcNAc...) asparagine). N-linked (GlcNAc...) asparagine glycans are attached at residues N2192 and N2311. 8 consecutive CNA-B domains span residues 2254-2321 (SDVS…FKLT), 2357-2402 (LPGV…TPIG), 2465-2514 (LPGV…YKQV), 2571-2640 (LSDI…NFVT), 2687-2754 (SDVS…FKLT), 2790-2835 (LPGV…TPIG), 2898-2947 (LPGV…YKQV), and 3004-3040 (LEGIELQLVDKDGKVIQSTTSGPDGKYQFEDVPPGDY). N2476 is a glycosylation site (N-linked (GlcNAc...) asparagine). The interval 2580 to 2603 (DKDGNEITNTKSGPDGKYQFEDVP) is disordered. N2622 is a glycosylation site (N-linked (GlcNAc...) asparagine). 2 N-linked (GlcNAc...) asparagine glycosylation sites follow: N2801 and N2909. 3 N-linked (GlcNAc...) asparagine glycosylation sites follow: N3048, N3055, and N3118. CNA-B domains follow at residues 3117-3184 (SNVS…FKLT), 3220-3256 (LPGVELSLQDPNGIVIQTITTDSDGNYYFDNLLPGDY), 3328-3364 (LPGVQVIITSSNGTKIADLVTDENGKYALKDQVPGSY), and 3434-3470 (VEGIELQLVDKDGKVIQSTTSGPDGKYQFEDVPPGDY). N3339 carries an N-linked (GlcNAc...) asparagine glycan. N3485 is a glycosylation site (N-linked (GlcNAc...) asparagine). One copy of the Kelch 2 repeat lies at 3503–3549 (SCFAVSGPLDNQNLGLSLFYEIGTMVWIDSNNNGKFEQPSDVLKSDV). 3 CNA-B domains span residues 3547-3614 (SDVS…FKLT), 3650-3686 (LPGVELSLQDSNGKVLDTTTTDESGSYKFDNLLPGDY), and 3758-3809 (LPGV…QVAQ). N3769 and N3827 each carry an N-linked (GlcNAc...) asparagine glycan. Positions 3864 to 3900 (LSDITIRLTDKDGKVIQSTTSGPDGKYQFEDVPPGDY) constitute a CNA-B 33 domain. Residue N3915 is glycosylated (N-linked (GlcNAc...) asparagine). 8 consecutive CNA-B domains span residues 3980-4047 (SDVS…FKLT), 4083-4128 (LPGV…TPIG), 4191-4240 (LPGV…YKQV), 4297-4378 (LSDI…NFVT), 4425-4492 (SDVS…FKLT), 4528-4573 (LPGV…TPIG), 4636-4685 (LPGV…YKQV), and 4742-4778 (VEGIPLTLIDKYGNSIQSTASGPNGKYQFEDVPPGDY). A glycan (N-linked (GlcNAc...) asparagine) is linked at N4202. The interval 4286–4341 (NTGKQTDDSPPLSDITIRLTDKDGNEITKTKSRPDGNENSNTKSGPDGKYQFEDVP) is disordered. Over residues 4304–4321 (LTDKDGNEITKTKSRPDG) the composition is skewed to basic and acidic residues. Residue N4360 is glycosylated (N-linked (GlcNAc...) asparagine). Residue N4647 is glycosylated (N-linked (GlcNAc...) asparagine). Residues N4792 and N4918 are each glycosylated (N-linked (GlcNAc...) asparagine). 4 CNA-B domains span residues 4865–4928 (ITLT…FKLT), 4964–5009 (LPGV…TPIG), 5072–5123 (LPGV…QVAQ), and 5178–5214 (LEGIELQLVDKDGKVIQSTTSGPNGKYQFEDVPPGDY). N-linked (GlcNAc...) asparagine glycosylation occurs at N5083. N-linked (GlcNAc...) asparagine glycosylation is found at N5229, N5292, and N5348. The Kelch 3 repeat unit spans residues 5247–5293 (SCFAVSGPLDNQNLGLSPFYEIGTIVWIDSNNNDKFEQPSDIGKSNV). 4 consecutive CNA-B domains span residues 5291-5358 (SNVS…FKLT), 5394-5430 (LPGVELSLQDSNGKVLDTTTTDESGNYKFDNLLPGDY), 5502-5553 (LPGV…QVAQ), and 5608-5644 (LSDITIRLTDKDGNEITNTKSGPDGKYQFEDVPPGDY). Residue N5513 is glycosylated (N-linked (GlcNAc...) asparagine). N-linked (GlcNAc...) asparagine glycosylation is present at N5659. CNA-B domains are found at residues 5724–5791 (SDVS…FKLT), 5827–5872 (LPGV…TPIG), 5935–5984 (LPGV…YKQV), and 6041–6077 (VEGIELNLVDKDGKVIQSTTSGPDGKYQFEDVPPGDY). An N-linked (GlcNAc...) asparagine glycan is attached at N5946. N6092 and N6155 each carry an N-linked (GlcNAc...) asparagine glycan. 4 CNA-B domains span residues 6154-6221 (SNVS…FKLT), 6257-6302 (LPGV…TPIG), 6365-6416 (LPGV…QDAQ), and 6471-6507 (LSDITIRLTDKDGNEITNTKSGPDGKYQFEDVPPGDY). An N-linked (GlcNAc...) asparagine glycan is attached at N6376. N-linked (GlcNAc...) asparagine glycans are attached at residues N6522 and N6535. CNA-B domains follow at residues 6587–6654 (SDVS…FKLT), 6690–6726 (LEGVELSLQDPNGTVLQTITTDESGNYKFDNLLPGDY), 6798–6849 (LPGV…QVNQ), and 6904–6940 (VEGIPLTLIDKYGNSIQSTASGPNGKYQFEDVPPGDY). N-linked (GlcNAc...) asparagine glycans are attached at residues N6701, N6809, and N6848. Residues N6954, N7080, N7137, and N7245 are each glycosylated (N-linked (GlcNAc...) asparagine). CNA-B domains follow at residues 7023 to 7090 (SDVS…FKLT), 7126 to 7171 (LAGV…TPIG), 7234 to 7285 (LPGV…QDAQ), 7340 to 7411 (LSDI…VTVK), 7456 to 7523 (SDVS…FKLT), 7559 to 7596 (LPGVELSLQDSNGKVLDTTTTTDESGNYKFDNLLPGDY), 7668 to 7719 (LTGV…QVAQ), and 7774 to 7810 (VEGIELNLVDKDDKVIQSTTSGPDGKYQFEDVPPGDY). The interval 7351 to 7372 (DGNEITNTKSGPDGKYQFEDVP) is disordered. 2 N-linked (GlcNAc...) asparagine glycosylation sites follow: N7391 and N7404. The N-linked (GlcNAc...) asparagine glycan is linked to N7679. N-linked (GlcNAc...) asparagine glycans are attached at residues N7825 and N7837. 7 CNA-B domains span residues 7887–7954 (SDVS…FKLT), 7990–8035 (LPGV…TPIG), 8098–8149 (LPGV…QVAQ), 8204–8265 (IPNI…FSLS), 8313–8374 (VGKS…VVDQ), 8420–8456 (LPGVELSLQDSNGKVLQTTTTNESGNYKFDNLPQGDY), and 8528–8587 (LPGI…PFDS). N-linked (GlcNAc...) asparagine glycosylation is found at N8109 and N8255. N-linked (GlcNAc...) asparagine glycosylation is found at N8441, N8539, N8629, N8636, N8655, N8693, N8753, N8811, N8896, N8930, N8976, N9023, N9073, N9087, N9123, N9137, N9146, N9149, N9186, N9297, N9305, N9349, N9409, N9419, N9533, N9543, N9556, N9601, N9709, N9718, N9786, N9839, N9850, N9867, N9891, N9941, N9957, N9989, N10042, N10096, N10111, N10174, N10267, N10315, N10348, N10360, N10379, N10394, N10431, N10477, N10552, N10581, N10715, N10786, N10802, N10943, and N11018. A Kelch 4 repeat occupies 8592–8638 (CFDLLDKSITNANLGLIPLYNIGSDAWLDNLNNGVRRNDSLLVPNVT). The 47-residue stretch at 8634–8680 (VPNVTMSLYDNNGNLIETTITNSSGKYQFNDIQPGSYCVRATVPSNY) folds into the CNA-B 77 domain. The CNA-B 78 domain occupies 8751–8810 (LPNVTVQLYDKVSGNILAATRSDDKGGYVVPNLLPSADYCVQFEVPPGYIVVVDSDDSVT). The CNA-B 79 domain occupies 8965-9014 (LPGVSVSLFSPNGTSIANTITDENGKYAFKDQVPGSYCIKMIIPPHYQQV). The 37-residue stretch at 9071–9107 (VPNITMTLLDSQGKQINSTITNANGFYQFVDVAPGNY) folds into the CNA-B 80 domain. Residues 9185–9220 (ANVSLSLVNTGNSEIKTTTTNSQGKYSFGQLLAGNY) enclose the CNA-B 81 domain. In terms of domain architecture, CNA-B 82 spans 9299–9332 (TITLTPNNTALPTQTTTTDVNGNYRFDNLVVGNY). CNA-B domains lie at 9407-9447 (LVNI…VVQF) and 9531-9569 (MANITVFLRSGSNLSQTIATTTTDANGTYIFTHLAPGNY). Residues 9659-9728 (VEGITVRIYD…ATGYISIDLS (70 aa)) form the CNA-B 85 domain. The CNA-B 86 domain occupies 10044-10103 (TLFNADGSTPNDIFGKPIQMAVTDVNGKYSIPNVPPGSYYMTVSIPPRYIISNFTTTGLV). The CNA-B 87 domain maps to 10172–10236 (LPNVTVLLLN…ITPTKLVSTS (65 aa)). Residues 10313 to 10370 (PGNFTVQLKSANQAVNGGLTTVPIGTVVATSPVAANGSFSIPNLQLGNYTLTLIPPSG) form the CNA-B 88 domain.

It belongs to the serine-aspartate repeat-containing protein (SDr) family.

It localises to the secreted. The protein is Colossin-A (colA) of Dictyostelium discoideum (Social amoeba).